We begin with the raw amino-acid sequence, 528 residues long: Ecdysteroid UDP-glucosyltransferase (528 aa).

A signal peptide spans 1 to 32 (MGHLHIVHWRLTMNGAIAALFLCLVMVHQQHA).

The protein belongs to the UDP-glycosyltransferase family.

Functionally, catalyzes the transfer of glucose from UDP-glucose to ecdysteroids which are insect molting hormones. Expression of egt interferes with normal insect development and block molting. This Mamestra brassicae nuclear polyhedrosis virus (MbNPV) protein is Ecdysteroid UDP-glucosyltransferase (EGT).